Here is a 161-residue protein sequence, read N- to C-terminus: UPF0178 protein BOV_1904 (161 aa).

It belongs to the UPF0178 family.

This Brucella ovis (strain ATCC 25840 / 63/290 / NCTC 10512) protein is UPF0178 protein BOV_1904.